A 312-amino-acid polypeptide reads, in one-letter code: Atrochrysone carboxyl ACP thioesterase AacuM (312 aa).

Positions 103, 105, 107, and 108 each coordinate Zn(2+). D107 serves as the catalytic Proton donor/acceptor.

It belongs to the metallo-beta-lactamase superfamily. Zn(2+) serves as cofactor.

It catalyses the reaction atrochrysone carboxyl-[ACP] + H2O = atrochrysone carboxylate + holo-[ACP] + H(+). The protein operates within secondary metabolite biosynthesis. Atrochrysone carboxyl ACP thioesterase; part of the gene cluster that mediates the biosynthesis of the tetrahydroxanthone dimer secalonic acid D. The pathway begins with the synthesis of atrochrysone thioester by the polyketide synthase AacuL. The atrochrysone carboxyl ACP thioesterase AacuM then breaks the thioester bond and releases the atrochrysone carboxylic acid from AacuL. Atrochrysone carboxylic acid is decarboxylated by the decarboxylase AacuI, and oxidized by the anthrone oxygenase AacuG to yield emodin. Emodin is then reduced to emodin hydroquinone by a yet unidentified oxidoreductase. A-ring reduction by the short chain dehydrogenase AacuN, dehydration by the scytalone dehydratase-like protein AacuK and probable spontaneous re-oxidation, results in overall deoxygenation to chrysophanol. Baeyer-Villiger oxidation by the Baeyer-Villiger monooxygenase (BVMO) AacuH then yields monodictyphenone. Monodictyphenone is transformed into compounds with the tetrahydroxanthone skeleton via methylesterification by the methyltransferase AacuQ, followed by the action of the flavin-dependent monooxygenase AacuC, the isomerase AacuP, and the short chain dehydrogenase/reductase AacuF or AacuD. AacuF and AacuD should accept the same compound as a substrate but perform the ketoreduction with a different stereoselectivity, thus yielding blennolides B and A, respectively. In the final step of the biosynthesis, the cytochrome P450 monooxygenase AacuE accepts blennolide B and/or blennolide A to conduct the dimerization reaction to furnish the tetrahydroxanthone dimers, secalonic acids D, B, and F. The polypeptide is Atrochrysone carboxyl ACP thioesterase AacuM (Aspergillus aculeatus (strain ATCC 16872 / CBS 172.66 / WB 5094)).